The sequence spans 303 residues: Ornithine carbamoyltransferase (303 aa).

Carbamoyl phosphate is bound by residues 53–56 (STRT), Gln80, Arg104, and 131–134 (HPCQ). L-ornithine contacts are provided by residues Asn162, Asp222, and 226 to 227 (SM). Carbamoyl phosphate is bound by residues 261-262 (CL) and Arg289.

Belongs to the aspartate/ornithine carbamoyltransferase superfamily. OTCase family.

It localises to the cytoplasm. It catalyses the reaction carbamoyl phosphate + L-ornithine = L-citrulline + phosphate + H(+). The protein operates within amino-acid biosynthesis; L-arginine biosynthesis; L-arginine from L-ornithine and carbamoyl phosphate: step 1/3. In terms of biological role, reversibly catalyzes the transfer of the carbamoyl group from carbamoyl phosphate (CP) to the N(epsilon) atom of ornithine (ORN) to produce L-citrulline. This Mesorhizobium japonicum (strain LMG 29417 / CECT 9101 / MAFF 303099) (Mesorhizobium loti (strain MAFF 303099)) protein is Ornithine carbamoyltransferase.